Consider the following 224-residue polypeptide: ATP phosphoribosyltransferase (224 aa).

The protein belongs to the ATP phosphoribosyltransferase family. Short subfamily. As to quaternary structure, heteromultimer composed of HisG and HisZ subunits.

The protein localises to the cytoplasm. It carries out the reaction 1-(5-phospho-beta-D-ribosyl)-ATP + diphosphate = 5-phospho-alpha-D-ribose 1-diphosphate + ATP. It functions in the pathway amino-acid biosynthesis; L-histidine biosynthesis; L-histidine from 5-phospho-alpha-D-ribose 1-diphosphate: step 1/9. Its function is as follows. Catalyzes the condensation of ATP and 5-phosphoribose 1-diphosphate to form N'-(5'-phosphoribosyl)-ATP (PR-ATP). Has a crucial role in the pathway because the rate of histidine biosynthesis seems to be controlled primarily by regulation of HisG enzymatic activity. This is ATP phosphoribosyltransferase from Cupriavidus necator (strain ATCC 17699 / DSM 428 / KCTC 22496 / NCIMB 10442 / H16 / Stanier 337) (Ralstonia eutropha).